Reading from the N-terminus, the 445-residue chain is Interferon-activable protein 202 (445 aa).

A compositionally biased stretch (polar residues) spans 1–27; sequence MSNRNLRSSTNSEFSEGQHQTPSSDSS. Residues 1–57 form a disordered region; it reads MSNRNLRSSTNSEFSEGQHQTPSSDSSGHGEDQPQASPGPNKKSHTPKKNISKGAVL. Residues 42–51 are compositionally biased toward basic residues; it reads KKSHTPKKNI. 2 HIN-200 domains span residues 46 to 243 and 244 to 441; these read TPKK…IKGE and KLLK…MEVI. 2 required for homomultimerization regions span residues 82-89 and 281-288; these read MFHATVAT.

It belongs to the HIN-200 family. Homomultimer; homotetramerizes (via HIN-200 domain 2), enhancing affinity for double-stranded DNA (dsDNA). Interacts (via HIN-200 domain 2) with AIM2 (via HIN-200 domain); preventing activation of the AIM2 inflammasome. Binds to several transcription factors, including NF-kappa-B p50 (NFKB1) and p65 (RELA), FOS, JUN, E2F1, E2F4, MYOD1 and myogenin. Also binds TP53/p53, the hypophosphorylated, growth-inhibitory form of the retinoblastoma protein and the p53-binding protein 1 (TP53BP1). Post-translationally, phosphorylated.

It localises to the cytoplasm. It is found in the nucleus. Functionally, DNA-binding protein involved in innate immune response and has anti-inflammatory activity. Inhibits caspase activation in response to cytosolic DNA by preventing activation of the AIM2 inflammasome, probably by sequestering cytoplasmic DNA and preventing its being bound by AIM2. Also inhibits activation of the AIM2 inflammasome via a direct interaction with AIM2, which prevents the interaction between AIM2 and PYCARD and formation of the AIM2 inflammasome. Binds double-stranded DNA (dsDNA) in the cytosol. Has anti-apoptotic effects due to inhibition of the transcriptional activity of TP53/p53. Inhibits the transcriptional activity of several transcription factors, including NF-kappa-B p50 and p65, FOS, JUN, E2F1, E2F4, MYOD1 and myogenin. This Mus musculus (Mouse) protein is Interferon-activable protein 202.